The sequence spans 709 residues: Peptidoglycan D,D-transpeptidase FtsI homolog (709 aa).

Residues 20–42 form a helical membrane-spanning segment; it reads LQGIYYAFLSISTMIKIALDPYS. The active-site Acyl-ester intermediate is the serine 341.

Belongs to the transpeptidase family.

The protein resides in the plastid. Its subcellular location is the chloroplast membrane. It catalyses the reaction Preferential cleavage: (Ac)2-L-Lys-D-Ala-|-D-Ala. Also transpeptidation of peptidyl-alanyl moieties that are N-acyl substituents of D-alanine.. The chain is Peptidoglycan D,D-transpeptidase FtsI homolog (ftsI) from Nephroselmis olivacea (Green alga).